The sequence spans 329 residues: 4-hydroxythreonine-4-phosphate dehydrogenase (329 aa).

Substrate is bound by residues H136 and T137. A divalent metal cation-binding residues include H166, H211, and H266. Substrate is bound by residues K274, N283, and R292.

It belongs to the PdxA family. As to quaternary structure, homodimer. The cofactor is Zn(2+). Mg(2+) is required as a cofactor. It depends on Co(2+) as a cofactor.

It localises to the cytoplasm. It carries out the reaction 4-(phosphooxy)-L-threonine + NAD(+) = 3-amino-2-oxopropyl phosphate + CO2 + NADH. Its pathway is cofactor biosynthesis; pyridoxine 5'-phosphate biosynthesis; pyridoxine 5'-phosphate from D-erythrose 4-phosphate: step 4/5. Its function is as follows. Catalyzes the NAD(P)-dependent oxidation of 4-(phosphooxy)-L-threonine (HTP) into 2-amino-3-oxo-4-(phosphooxy)butyric acid which spontaneously decarboxylates to form 3-amino-2-oxopropyl phosphate (AHAP). This Neisseria meningitidis serogroup A / serotype 4A (strain DSM 15465 / Z2491) protein is 4-hydroxythreonine-4-phosphate dehydrogenase.